Reading from the N-terminus, the 223-residue chain is Trichome differentiation protein GL1 (223 aa).

HTH myb-type domains lie at 11 to 63 (NQEY…MNYL) and 64 to 118 (SPNV…SKKL). 2 consecutive DNA-binding regions (H-T-H motif) follow at residues 39–63 (WNRI…MNYL) and 91–114 (WSLI…NTHL).

It is found in the nucleus. Its function is as follows. Regulates the production of a signal that induces hair (trichome) precursor cells on leaf primordia to differentiate. This is Trichome differentiation protein GL1 (GL1) from Arabidopsis lyrata (Lyre-leaved rock-cress).